The sequence spans 430 residues: Serine--tRNA ligase (430 aa).

The tract at residues leucine 103–glycine 127 is disordered. Residue threonine 237–glutamate 239 participates in L-serine binding. Arginine 268 to glutamate 270 contacts ATP. Position 291 (glutamate 291) interacts with L-serine. ATP is bound at residue glutamate 355–serine 358. Serine 391 is an L-serine binding site.

The protein belongs to the class-II aminoacyl-tRNA synthetase family. Type-1 seryl-tRNA synthetase subfamily. In terms of assembly, homodimer. The tRNA molecule binds across the dimer.

Its subcellular location is the cytoplasm. It catalyses the reaction tRNA(Ser) + L-serine + ATP = L-seryl-tRNA(Ser) + AMP + diphosphate + H(+). The enzyme catalyses tRNA(Sec) + L-serine + ATP = L-seryl-tRNA(Sec) + AMP + diphosphate + H(+). The protein operates within aminoacyl-tRNA biosynthesis; selenocysteinyl-tRNA(Sec) biosynthesis; L-seryl-tRNA(Sec) from L-serine and tRNA(Sec): step 1/1. Functionally, catalyzes the attachment of serine to tRNA(Ser). Is also able to aminoacylate tRNA(Sec) with serine, to form the misacylated tRNA L-seryl-tRNA(Sec), which will be further converted into selenocysteinyl-tRNA(Sec). The chain is Serine--tRNA ligase from Sodalis glossinidius (strain morsitans).